A 293-amino-acid polypeptide reads, in one-letter code: Diaminopimelate epimerase (293 aa).

Substrate-binding residues include asparagine 17, glutamine 47, and asparagine 67. The active-site Proton donor is the cysteine 76. Residues 77–78, asparagine 164, asparagine 197, and 215–216 contribute to the substrate site; these read GN and ER. Catalysis depends on cysteine 224, which acts as the Proton acceptor. Substrate is bound at residue 225–226; the sequence is GS.

Belongs to the diaminopimelate epimerase family. As to quaternary structure, homodimer.

The protein resides in the cytoplasm. The catalysed reaction is (2S,6S)-2,6-diaminopimelate = meso-2,6-diaminopimelate. Its pathway is amino-acid biosynthesis; L-lysine biosynthesis via DAP pathway; DL-2,6-diaminopimelate from LL-2,6-diaminopimelate: step 1/1. Its function is as follows. Catalyzes the stereoinversion of LL-2,6-diaminopimelate (L,L-DAP) to meso-diaminopimelate (meso-DAP), a precursor of L-lysine and an essential component of the bacterial peptidoglycan. This is Diaminopimelate epimerase from Rhodopseudomonas palustris (strain HaA2).